The sequence spans 78 residues: UPF0235 protein AF_2072 (78 aa).

Belongs to the UPF0235 family.

This Archaeoglobus fulgidus (strain ATCC 49558 / DSM 4304 / JCM 9628 / NBRC 100126 / VC-16) protein is UPF0235 protein AF_2072.